Consider the following 175-residue polypeptide: UPF0398 protein SPH_0478 (175 aa).

Belongs to the UPF0398 family.

The chain is UPF0398 protein SPH_0478 from Streptococcus pneumoniae (strain Hungary19A-6).